We begin with the raw amino-acid sequence, 350 residues long: Ion-translocating oxidoreductase complex subunit D (350 aa).

The next 4 helical transmembrane spans lie at 36 to 56, 68 to 88, 89 to 109, and 120 to 140; these read FYFF…IALL, PIIS…IGVS, IPSI…IVIV, and IFNP…VQMT. Residue T185 is modified to FMN phosphoryl threonine. The next 5 membrane-spanning stretches (helical) occupy residues 212–232, 239–259, 265–285, 291–311, and 315–335; these read GFGV…LAML, WQIS…GYLL, IGPL…FIAT, ATSV…VYVI, and GGYP…APFI.

This sequence belongs to the NqrB/RnfD family. As to quaternary structure, the complex is composed of six subunits: RnfA, RnfB, RnfC, RnfD, RnfE and RnfG. It depends on FMN as a cofactor.

It localises to the cell inner membrane. In terms of biological role, part of a membrane-bound complex that couples electron transfer with translocation of ions across the membrane. The protein is Ion-translocating oxidoreductase complex subunit D of Shewanella piezotolerans (strain WP3 / JCM 13877).